The chain runs to 515 residues: Protein FAM98A (515 aa).

Disordered stretches follow at residues valine 297–glycine 411 and serine 432–serine 515. The span at valine 302–glutamate 311 shows a compositional bias: basic and acidic residues. A compositionally biased stretch (gly residues) spans tryptophan 382–aspartate 395. Residues arginine 444–serine 456 show a composition bias toward basic and acidic residues. The segment covering glycine 457–glycine 481 has biased composition (gly residues). Over residues tyrosine 485–glutamine 501 the composition is skewed to low complexity. Positions tyrosine 502–serine 515 are enriched in polar residues.

It belongs to the FAM98 family. As to quaternary structure, interacts (via N- and C-terminus) with DDX1. Interacts (via N- and C-terminus) with C14orf166. Interacts with FAM98B. Interacts with PLEKHM1 (via N- and C-terminus).

Its function is as follows. Positively stimulates PRMT1-induced protein arginine methylation. Involved in skeletal homeostasis. Positively regulates lysosome peripheral distribution and ruffled border formation in osteoclasts. The polypeptide is Protein FAM98A (Rattus norvegicus (Rat)).